Reading from the N-terminus, the 203-residue chain is Thymidylate kinase (203 aa).

Residue 7-14 participates in ATP binding; the sequence is GGEGAGKT.

The protein belongs to the thymidylate kinase family.

The catalysed reaction is dTMP + ATP = dTDP + ADP. In terms of biological role, phosphorylation of dTMP to form dTDP in both de novo and salvage pathways of dTTP synthesis. The chain is Thymidylate kinase (tmk) from Chlamydia muridarum (strain MoPn / Nigg).